We begin with the raw amino-acid sequence, 244 residues long: Glycoprotein 3 (244 aa).

Its function is as follows. Although P4 acquires its capsid proteins from helper phages such as P2, it possesses the ability to assemble capsids that are only one-third the size of the helper's capsid. The sid protein is responsible for the assembly of P4-sized shells. It forms a P4-specific scaffold with icosahedral symmetry on the outside of the procapsid-like particles. The polypeptide is Glycoprotein 3 (sid) (Enterobacteria phage P4 (Bacteriophage P4)).